Reading from the N-terminus, the 230-residue chain is Protein GrpE (230 aa).

Disordered stretches follow at residues 1–26 (MADE…DREA) and 209–230 (GVSK…EDNA). Residues 221-230 (NGASTSEDNA) are compositionally biased toward polar residues.

The protein belongs to the GrpE family. As to quaternary structure, homodimer.

Its subcellular location is the cytoplasm. Its function is as follows. Participates actively in the response to hyperosmotic and heat shock by preventing the aggregation of stress-denatured proteins, in association with DnaK and GrpE. It is the nucleotide exchange factor for DnaK and may function as a thermosensor. Unfolded proteins bind initially to DnaJ; upon interaction with the DnaJ-bound protein, DnaK hydrolyzes its bound ATP, resulting in the formation of a stable complex. GrpE releases ADP from DnaK; ATP binding to DnaK triggers the release of the substrate protein, thus completing the reaction cycle. Several rounds of ATP-dependent interactions between DnaJ, DnaK and GrpE are required for fully efficient folding. This Brucella suis biovar 1 (strain 1330) protein is Protein GrpE.